Here is a 1073-residue protein sequence, read N- to C-terminus: MPKRTDIKSILILGAGPIVIGQACEFDYSGAQACKALREEGYRVILVNSNPATIMTDPEMADATYIEPIHWEVVRKIIEKERPDAVLPTMGGQTALNCALELERQGVLEEFGVTMIGATADAIDKAEDRRRFDVAMKKIGLETARSGIAHSMEEALAVAAEVGFPCIIRPSFTMGGSGGGIAYNREEFEEICARGLDLSPTKELLIDESLIGWKEYEMEVVRDKNDNCIIVCSIENFDAMGIHTGDSITVAPAQTLTDKEYQIMRNASMAVLREIGVETGGSNVQFAVNPKNGRLIVIEMNPRVSRSSALASKATGFPIAKVAAKLAVGYTLDELMNDITGGRTPASFEPSIDYVVTKIPRFNFEKFAGANDRLTTQMKSVGEVMAIGRTQQESLQKALRGLEVGATGFDPKVSLDDPEALTKIRRELKDAGAERIWYIADAFRAGLSVDGVFNLTNIDRWFLVQIEELVRLEEKVAEVGITGLHAEFLRQLKRKGFADARLAKLAGVREAEIRKLRDQYDLHPVYKRVDTCAAEFATDTAYMYSTYEEECEANPSTDREKIMVLGGGPNRIGQGIEFDYCCVHASLALREDGYETIMVNCNPETVSTDYDTSDRLYFEPVTLEDVLEIVRIEKPKGVIVQYGGQTPLKLARALEAAGVPVIGTSPDAIDRAEDRERFQHAVERLKLKQPANATVTTIEMAVEKAKEIGYPLVVRPSYVLGGRAMEIVYDEADLRRYFQTAVSVSNDAPVLLDHFLDDAVEVDVDAICDGEVVLIGGIMEHIEQAGVHSGDSACSLPAYTLSQEIQDVMRQQVQKLAFELQVRGLMNVQFAVKNNEVYLIEVNPRAARTVPFVSKATGVPLAKVAARVMAGKSLAEQGVTKEVIPPYYSVKEVVLPFNKFPGVDPLLGPEMRSTGEVMGVGRTFAEAFAKAQLGSNSTMKKHGRALLSVREGDKERVVDLAAKLLKQGFELDATHGTAIVLGEAGINPRLVNKVHEGRPHIQDRIKNGEYTYIINTTSGRRAIEDSRVIRRSALQYKVHYDTTLNGGFATAMALNADATEKVISVQEMHAQIK.

Residues 2–403 (PKRTDIKSIL…SLQKALRGLE (402 aa)) form a carboxyphosphate synthetic domain region. Positions 129, 169, 175, 176, 208, 210, 215, 241, 242, 243, 285, and 299 each coordinate ATP. The region spanning 133–328 (DVAMKKIGLE…IAKVAAKLAV (196 aa)) is the ATP-grasp 1 domain. Mg(2+)-binding residues include Gln285, Glu299, and Asn301. Mn(2+) contacts are provided by Gln285, Glu299, and Asn301. Positions 404–553 (VGATGFDPKV…YSTYEEECEA (150 aa)) are oligomerization domain. The carbamoyl phosphate synthetic domain stretch occupies residues 554–936 (NPSTDREKIM…AFAKAQLGSN (383 aa)). The ATP-grasp 2 domain maps to 679 to 870 (QHAVERLKLK…LAKVAARVMA (192 aa)). ATP contacts are provided by Arg715, His754, Leu756, Glu761, Gly786, Val787, His788, Ser789, Gln829, and Glu841. Mg(2+) is bound by residues Gln829, Glu841, and Asn843. Mn(2+)-binding residues include Gln829, Glu841, and Asn843. The MGS-like domain occupies 937–1073 (STMKKHGRAL…SVQEMHAQIK (137 aa)). Residues 937 to 1073 (STMKKHGRAL…SVQEMHAQIK (137 aa)) are allosteric domain.

It belongs to the CarB family. As to quaternary structure, composed of two chains; the small (or glutamine) chain promotes the hydrolysis of glutamine to ammonia, which is used by the large (or ammonia) chain to synthesize carbamoyl phosphate. Tetramer of heterodimers (alpha,beta)4. Mg(2+) serves as cofactor. Requires Mn(2+) as cofactor.

It carries out the reaction hydrogencarbonate + L-glutamine + 2 ATP + H2O = carbamoyl phosphate + L-glutamate + 2 ADP + phosphate + 2 H(+). The catalysed reaction is hydrogencarbonate + NH4(+) + 2 ATP = carbamoyl phosphate + 2 ADP + phosphate + 2 H(+). Its pathway is amino-acid biosynthesis; L-arginine biosynthesis; carbamoyl phosphate from bicarbonate: step 1/1. It participates in pyrimidine metabolism; UMP biosynthesis via de novo pathway; (S)-dihydroorotate from bicarbonate: step 1/3. Large subunit of the glutamine-dependent carbamoyl phosphate synthetase (CPSase). CPSase catalyzes the formation of carbamoyl phosphate from the ammonia moiety of glutamine, carbonate, and phosphate donated by ATP, constituting the first step of 2 biosynthetic pathways, one leading to arginine and/or urea and the other to pyrimidine nucleotides. The large subunit (synthetase) binds the substrates ammonia (free or transferred from glutamine from the small subunit), hydrogencarbonate and ATP and carries out an ATP-coupled ligase reaction, activating hydrogencarbonate by forming carboxy phosphate which reacts with ammonia to form carbamoyl phosphate. This is Carbamoyl phosphate synthase large chain from Escherichia coli O6:H1 (strain CFT073 / ATCC 700928 / UPEC).